Reading from the N-terminus, the 589-residue chain is Probable peptidoglycan D,D-transpeptidase FtsI (589 aa).

The chain crosses the membrane as a helical span at residues I47–W67. S296 acts as the Acyl-ester intermediate in catalysis.

It belongs to the transpeptidase family. Interacts with FtsN and FtsW.

The protein localises to the cell inner membrane. It catalyses the reaction Preferential cleavage: (Ac)2-L-Lys-D-Ala-|-D-Ala. Also transpeptidation of peptidyl-alanyl moieties that are N-acyl substituents of D-alanine.. It participates in cell wall biogenesis; peptidoglycan biosynthesis. In terms of biological role, catalyzes cross-linking of the peptidoglycan cell wall at the division septum. In Caulobacter vibrioides (strain NA1000 / CB15N) (Caulobacter crescentus), this protein is Probable peptidoglycan D,D-transpeptidase FtsI (ftsI).